The sequence spans 510 residues: MFIEKFRVESPNVKYGDGEIESVYSYETTELVHEVRNGSYQWVVKPKSVQYQFKTDTRVPRLGVMLVGWGGNNGSTLTAGVIANREGISWVTKEKVQQANYFGSLTQSSSIRVGSFNGEEIYAPFKSLLPMVNPDEIVFGGWDISDMNLADAMGRAKVLDIDLQKQLRPYMESMVPLPGIYNPDFIAANQGSRANNVIKGPKKQQVQRIIDDIREFKEREKVEKVVVLWTANTERYSDLVVGLNDTMENLLAAVERDEAEISPSSLYALACIMEGVPFVNGSPQNTFVPGLIEMAIKRNSLIGGDDFKSGQTKMKSVLVDFLVGAGIKPTSIVSYNHLGNNDGMNLSAPQTFRSKEISKSNVVDDMVSSNGILYEPGEHPDHVIVIKYVPYVGDSKRAMDEYTSEIFMGGKSTIILHNTCEDSLLAAPIILDLVLLAELSTRIQLKAEGESKFHSFHPVASILSYLSKAPLVPPGTPVVNALSKQRAMLENILRACVGLAPENNMILEYK.

Positions 70, 71, 72, 73, 143, 180, 190, 193, 230, 231, 232, 233, 281, 282, 306, 309, 340, 341, 342, 355, 393, 394, 422, and 423 each coordinate NAD(+).

This sequence belongs to the myo-inositol 1-phosphate synthase family. The cofactor is NAD(+).

The protein localises to the cytoplasm. Its subcellular location is the cytosol. The protein resides in the nucleus. The catalysed reaction is D-glucose 6-phosphate = 1D-myo-inositol 3-phosphate. The protein operates within polyol metabolism; myo-inositol biosynthesis; myo-inositol from D-glucose 6-phosphate: step 1/2. Functionally, key enzyme in myo-inositol biosynthesis pathway that catalyzes the conversion of glucose 6-phosphate to 1-myo-inositol 1-phosphate in a NAD-dependent manner. The polypeptide is Inositol-3-phosphate synthase (TUR1) (Spirodela polyrhiza (Giant duckweed)).